The following is a 195-amino-acid chain: Imidazoleglycerol-phosphate dehydratase (195 aa).

The protein belongs to the imidazoleglycerol-phosphate dehydratase family.

Its subcellular location is the cytoplasm. It catalyses the reaction D-erythro-1-(imidazol-4-yl)glycerol 3-phosphate = 3-(imidazol-4-yl)-2-oxopropyl phosphate + H2O. It participates in amino-acid biosynthesis; L-histidine biosynthesis; L-histidine from 5-phospho-alpha-D-ribose 1-diphosphate: step 6/9. This chain is Imidazoleglycerol-phosphate dehydratase, found in Sphingopyxis alaskensis (strain DSM 13593 / LMG 18877 / RB2256) (Sphingomonas alaskensis).